An 882-amino-acid chain; its full sequence is Alanine--tRNA ligase (882 aa).

Histidine 571, histidine 575, cysteine 673, and histidine 677 together coordinate Zn(2+).

The protein belongs to the class-II aminoacyl-tRNA synthetase family. It depends on Zn(2+) as a cofactor.

It is found in the cytoplasm. It carries out the reaction tRNA(Ala) + L-alanine + ATP = L-alanyl-tRNA(Ala) + AMP + diphosphate. Catalyzes the attachment of alanine to tRNA(Ala) in a two-step reaction: alanine is first activated by ATP to form Ala-AMP and then transferred to the acceptor end of tRNA(Ala). Also edits incorrectly charged Ser-tRNA(Ala) and Gly-tRNA(Ala) via its editing domain. The protein is Alanine--tRNA ligase of Stenotrophomonas maltophilia (strain K279a).